A 93-amino-acid chain; its full sequence is Integration host factor subunit beta (93 aa).

The protein belongs to the bacterial histone-like protein family. Heterodimer of an alpha and a beta chain.

This protein is one of the two subunits of integration host factor, a specific DNA-binding protein that functions in genetic recombination as well as in transcriptional and translational control. The polypeptide is Integration host factor subunit beta (Haemophilus ducreyi (strain 35000HP / ATCC 700724)).